The primary structure comprises 296 residues: 3-methyl-2-oxobutanoate hydroxymethyltransferase (296 aa).

Residues 1–14 are compositionally biased toward low complexity; it reads MTAPTPTPANAATP. Residues 1 to 29 form a disordered region; that stretch reads MTAPTPTPANAATPYGTLPPASPLPQRRP. Mg(2+)-binding residues include Asp-71 and Asp-114. 3-methyl-2-oxobutanoate contacts are provided by residues 71-72, Asp-114, and Lys-143; that span reads DS. Glu-145 contributes to the Mg(2+) binding site. Glu-212 acts as the Proton acceptor in catalysis.

The protein belongs to the PanB family. Homodecamer; pentamer of dimers. It depends on Mg(2+) as a cofactor.

The protein localises to the cytoplasm. It carries out the reaction 3-methyl-2-oxobutanoate + (6R)-5,10-methylene-5,6,7,8-tetrahydrofolate + H2O = 2-dehydropantoate + (6S)-5,6,7,8-tetrahydrofolate. Its pathway is cofactor biosynthesis; (R)-pantothenate biosynthesis; (R)-pantoate from 3-methyl-2-oxobutanoate: step 1/2. Functionally, catalyzes the reversible reaction in which hydroxymethyl group from 5,10-methylenetetrahydrofolate is transferred onto alpha-ketoisovalerate to form ketopantoate. The chain is 3-methyl-2-oxobutanoate hydroxymethyltransferase from Paracidovorax citrulli (strain AAC00-1) (Acidovorax citrulli).